A 389-amino-acid polypeptide reads, in one-letter code: Tubulin-like protein CetZ3 (389 aa).

Residues Gln-10–Lys-14, Gly-110–Gly-112, Glu-142, Asn-169, and Asn-187 each bind GTP.

It belongs to the CetZ family.

The protein resides in the cytoplasm. Involved in cell shape control. The sequence is that of Tubulin-like protein CetZ3 from Haloferax volcanii (strain ATCC 29605 / DSM 3757 / JCM 8879 / NBRC 14742 / NCIMB 2012 / VKM B-1768 / DS2) (Halobacterium volcanii).